A 409-amino-acid chain; its full sequence is uncharacterized protein (409 aa).

A run of 4 helical transmembrane segments spans residues 20-40 (ILTMLGVIIGIAAIIAIVSML), 283-303 (FALLLGGIASISLLVGGIGVM), 344-364 (IGGILGVLAGFGIAKLLTVIF), and 372-392 (IPAVVGALIFSMAVGIIFGLL).

The protein belongs to the ABC-4 integral membrane protein family.

Its subcellular location is the cell membrane. This is an uncharacterized protein from Bacillus subtilis (strain 168).